The primary structure comprises 549 residues: Guanine nucleotide-binding protein-like 3 (549 aa).

Positions 1–45 (MKRPKLKKASKRMTCHKRYKIQKKVREHHRKLRKEAKKRGHKKPR) are enriched in basic residues. Disordered regions lie at residues 1–56 (MKRP…SAPF) and 73–104 (ELKQ…SNVE). The basic stretch occupies residues 2-46 (KRPKLKKASKRMTCHKRYKIQKKVREHHRKLRKEAKKRGHKKPRK). Positions 56–95 (FKEALLREAELRKQRLEELKQQQKLDRQKELEKKRKLETN) form a coiled coil. The segment covering 73 to 96 (ELKQQQKLDRQKELEKKRKLETNP) has biased composition (basic and acidic residues). Lysine 79 is modified (N6-acetyllysine). Glycyl lysine isopeptide (Lys-Gly) (interchain with G-Cter in SUMO2) cross-links involve residues lysine 91 and lysine 99. Serine 101 bears the Phosphoserine mark. Glycyl lysine isopeptide (Lys-Gly) (interchain with G-Cter in SUMO2) cross-links involve residues lysine 114, lysine 179, lysine 196, lysine 253, lysine 267, and lysine 275. A CP-type G domain is found at 131 to 312 (CQELKKVIEA…IIDSPSFIVS (182 aa)). 178–181 (NKSD) lines the GTP pocket. 261-268 (GFPNVGKS) serves as a coordination point for GTP. Residues 282–456 (VGVSMGLTRS…HLANSILFQS (175 aa)) form an intermediate region. 305 to 308 (DSPS) provides a ligand contact to GTP. The acidic stretch occupies residues 465 to 543 (EEKDIHEELP…KIIEEDDAYD (79 aa)). Residues 474–483 (PKRKERKQEE) are compositionally biased toward basic and acidic residues. The segment at 474-532 (PKRKERKQEEREDDKDSDQETVDEEVDENSSGMFAAEETGEALSEETTAGEQSTRSFIL) is disordered. The span at 484–501 (REDDKDSDQETVDEEVDE) shows a compositional bias: acidic residues. Residues serine 490, serine 504, serine 517, and serine 529 each carry the phosphoserine modification. The span at 518–529 (EETTAGEQSTRS) shows a compositional bias: polar residues.

This sequence belongs to the TRAFAC class YlqF/YawG GTPase family. In terms of assembly, interacts with MDM2; this interaction stabilizes MDM2. Interaction with MDM2 occurs in the nucleoplasm and is triggered by a nucleolar release mechanism, such as mitosis-induced nucleolar disassembly. Indirectly interacts with TP53, via MDM2-binding. Interacts with TSC22D1 isoform 2. Increased levels in lung tissue in cancer patients.

The protein localises to the nucleus. It is found in the nucleolus. Functionally, may be required to maintain the proliferative capacity of stem cells. Stabilizes MDM2 by preventing its ubiquitination, and hence proteasomal degradation. This is Guanine nucleotide-binding protein-like 3 (GNL3) from Homo sapiens (Human).